The primary structure comprises 793 residues: Lon protease 1 (793 aa).

One can recognise a Lon N-terminal domain in the interval 8–202 (VPVIPLKNSV…KLLDRLQELK (195 aa)). 354–361 (GPPGVGKT) is a binding site for ATP. Residues 590 to 770 (LLPPGVVTGL…NEVLKITLGV (181 aa)) enclose the Lon proteolytic domain. Catalysis depends on residues Ser676 and Lys719.

This sequence belongs to the peptidase S16 family. Homohexamer. Organized in a ring with a central cavity.

It localises to the cytoplasm. It carries out the reaction Hydrolysis of proteins in presence of ATP.. Its function is as follows. ATP-dependent serine protease that mediates the selective degradation of mutant and abnormal proteins as well as certain short-lived regulatory proteins. Required for cellular homeostasis and for survival from DNA damage and developmental changes induced by stress. Degrades polypeptides processively to yield small peptide fragments that are 5 to 10 amino acids long. Binds to DNA in a double-stranded, site-specific manner. This is Lon protease 1 from Bdellovibrio bacteriovorus (strain ATCC 15356 / DSM 50701 / NCIMB 9529 / HD100).